We begin with the raw amino-acid sequence, 618 residues long: Glucose starvation modulator protein 1 (618 aa).

Positions 20-48 (CEFCHTKHIQCDVGRPCQNCLKRNIGKFC) form a DNA-binding region, zn(2)-C6 fungal-type. Residues 325 to 352 (ANANTHPSHNAKLESECDSSSHSDADLE) form a disordered region. Residues 335–352 (AKLESECDSSSHSDADLE) show a composition bias toward basic and acidic residues. The PAS domain occupies 466–538 (LLDLENMAKL…QIFNELLAFG (73 aa)).

The protein belongs to the ERT1/acuK family.

It localises to the nucleus. In terms of biological role, transcription factor which regulates nonfermentable carbon utilization. Binds specifically to 5'-CGGN(8)CGG-3' and 5'-CGGN(9)CGG-3' sequences in the promoter region. This is Glucose starvation modulator protein 1 (GSM1) from Saccharomyces cerevisiae (strain ATCC 204508 / S288c) (Baker's yeast).